We begin with the raw amino-acid sequence, 326 residues long: Palmitoyltransferase ERF2 (326 aa).

Over 1–62 (MKGNPSTHEV…RLRAVKTARP (62 aa)) the chain is Cytoplasmic. A helical membrane pass occupies residues 63-83 (FSLVVLFLILSPMVLFSVFEA). The Lumenal portion of the chain corresponds to 84–90 (HRLWHTR). Residues 91–111 (YGYKALVVLFYYAWAWSLLSF) traverse the membrane as a helical segment. The Cytoplasmic segment spans residues 112–202 (TKTATSDPGV…NCVGQRNYRY (91 aa)). In terms of domain architecture, DHHC spans 158–208 (KYCHTCKIWRPPRASHCSVCECCVLTHDHHCIWVNNCVGQRNYRYFLAFLL). Cys188 (S-palmitoyl cysteine intermediate) is an active-site residue. The chain crosses the membrane as a helical span at residues 203–223 (FLAFLLSSTLACALLIANCAL). Residues 224–241 (HLHRALHEGIRVSHRPLP) are Lumenal-facing. A helical membrane pass occupies residues 242 to 262 (VAVLLCVYAAVLCVYPVILLG). Residues 263-326 (YHVAMSGTQQ…GPRSCNYRYR (64 aa)) lie on the Cytoplasmic side of the membrane.

The protein belongs to the DHHC palmitoyltransferase family. ERF2/ZDHHC9 subfamily. As to quaternary structure, interacts with ERF4. Post-translationally, autopalmitoylated.

The protein resides in the endoplasmic reticulum membrane. The enzyme catalyses L-cysteinyl-[protein] + hexadecanoyl-CoA = S-hexadecanoyl-L-cysteinyl-[protein] + CoA. Functionally, the ERF2-ERF4 complex is a palmitoyltransferase specific for Ras proteins. This is Palmitoyltransferase ERF2 (ERF2) from Candida glabrata (strain ATCC 2001 / BCRC 20586 / JCM 3761 / NBRC 0622 / NRRL Y-65 / CBS 138) (Yeast).